A 347-amino-acid chain; its full sequence is Endothelin receptor type B (347 aa).

Residues 1–7 (EIKETFK) lie on the Extracellular side of the membrane. The helical transmembrane segment at 8–32 (YINTVVSCLVFVLGIIGNSTLLRII) threads the bilayer. Topologically, residues 33-43 (YKNKCMRNGPN) are cytoplasmic. The helical transmembrane segment at 44–69 (ILIASLALGDLLHIIIDIPISVYKLL) threads the bilayer. Residues 70–81 (AEDWPFGVEMCK) lie on the Extracellular side of the membrane. Residues Cys-80 and Cys-161 are joined by a disulfide bond. A helical membrane pass occupies residues 82 to 103 (LVPFIQKASVGITVLSLCALSI). Residues 104 to 124 (DRYRAVASWSRIKGIGVPKWT) lie on the Cytoplasmic side of the membrane. The helical transmembrane segment at 125–149 (AVEIVLIWVISVVLAVPEAIAFDMI) threads the bilayer. Residues 150–177 (TMEYRGKDLRICLLHPTQKTSFMMFYKQ) lie on the Extracellular side of the membrane. A helical transmembrane segment spans residues 178 to 202 (AKDWWLFSFYFCLPLAITALFYTLM). The Cytoplasmic portion of the chain corresponds to 203-230 (TCEMLRKKSGMQIALNDHLKQRREVAKT). A helical transmembrane segment spans residues 231–256 (VFCLVLVFALCWLPLHLSRILKLTIY). Residues 257–268 (DQKDPNRCELLS) lie on the Extracellular side of the membrane. Residues 269–295 (FFLVMDYIGINMASLNSCINPIALYLV) form a helical membrane-spanning segment. Over 296 to 347 (SKRFQNCFKSCLCCWCQSKDLLSLEERQSCLKFKANDHGYDNFRSSNKYSSS) the chain is Cytoplasmic. S-palmitoyl cysteine attachment occurs at residues Cys-309 and Cys-311.

It belongs to the G-protein coupled receptor 1 family. Endothelin receptor subfamily. EDNRB sub-subfamily.

The protein localises to the cell membrane. Its function is as follows. Non-specific receptor for endothelin 1, 2, and 3. Mediates its action by association with G proteins that activate a phosphatidylinositol-calcium second messenger system. This is Endothelin receptor type B (EDNRB) from Coturnix japonica (Japanese quail).